The primary structure comprises 121 residues: Protein AC4 (121 aa).

Positions 11-30 (RGQSSNPHTSESQERNIQTG) are disordered. The segment covering 12 to 30 (GQSSNPHTSESQERNIQTG) has biased composition (polar residues).

This sequence belongs to the geminiviridae protein AC4/C4 family.

Functionally, pathogenicity determinant. May act as a suppressor of RNA-mediated gene silencing, also known as post-transcriptional gene silencing (PTGS), a mechanism of plant viral defense that limits the accumulation of viral RNAs. The protein is Protein AC4 of Cabbage leaf curl virus (isolate Jamaica) (CaLCuV).